The primary structure comprises 105 residues: Large ribosomal subunit protein uL24 (105 aa).

This sequence belongs to the universal ribosomal protein uL24 family. Part of the 50S ribosomal subunit.

In terms of biological role, one of two assembly initiator proteins, it binds directly to the 5'-end of the 23S rRNA, where it nucleates assembly of the 50S subunit. Its function is as follows. One of the proteins that surrounds the polypeptide exit tunnel on the outside of the subunit. This chain is Large ribosomal subunit protein uL24, found in Mycobacterium leprae (strain Br4923).